Consider the following 286-residue polypeptide: ATP synthase gamma chain (286 aa).

The protein belongs to the ATPase gamma chain family. As to quaternary structure, F-type ATPases have 2 components, CF(1) - the catalytic core - and CF(0) - the membrane proton channel. CF(1) has five subunits: alpha(3), beta(3), gamma(1), delta(1), epsilon(1). CF(0) has three main subunits: a, b and c.

It localises to the cell membrane. In terms of biological role, produces ATP from ADP in the presence of a proton gradient across the membrane. The gamma chain is believed to be important in regulating ATPase activity and the flow of protons through the CF(0) complex. The polypeptide is ATP synthase gamma chain (Mycoplasma mobile (strain ATCC 43663 / 163K / NCTC 11711) (Mesomycoplasma mobile)).